Consider the following 262-residue polypeptide: Tryptophan synthase alpha chain (262 aa).

Catalysis depends on proton acceptor residues glutamate 49 and aspartate 60.

This sequence belongs to the TrpA family. Tetramer of two alpha and two beta chains.

It catalyses the reaction (1S,2R)-1-C-(indol-3-yl)glycerol 3-phosphate + L-serine = D-glyceraldehyde 3-phosphate + L-tryptophan + H2O. It participates in amino-acid biosynthesis; L-tryptophan biosynthesis; L-tryptophan from chorismate: step 5/5. In terms of biological role, the alpha subunit is responsible for the aldol cleavage of indoleglycerol phosphate to indole and glyceraldehyde 3-phosphate. The chain is Tryptophan synthase alpha chain from Aquifex aeolicus (strain VF5).